A 385-amino-acid chain; its full sequence is Proteinase-activated receptor 4 (385 aa).

Residues 1–17 (MWGRLLLWPLVLGFSLS) form the signal peptide. Positions 18-47 (GGTQTPSVYDESGSTGGGDDSTPSILPAPR) are cleaved as a propeptide — removed for receptor activation. The segment at 21-42 (QTPSVYDESGSTGGGDDSTPSI) is disordered. Residues 48-82 (GYPGQVCANDSDTLELPDSSRALLLGWVPTRLVPA) are Extracellular-facing. An N-linked (GlcNAc...) asparagine glycan is attached at Asn-56. A helical membrane pass occupies residues 83-103 (LYGLVLVVGLPANGLALWVLA). At 104-108 (TQAPR) the chain is on the cytoplasmic side. A helical membrane pass occupies residues 109-129 (LPSTMLLMNLAAADLLLALAL). Residues 130 to 151 (PPRIAYHLRGQRWPFGEAACRL) lie on the Extracellular side of the membrane. Cysteines 149 and 228 form a disulfide. The chain crosses the membrane as a helical span at residues 152-172 (ATAALYGHMYGSVLLLAAVSL). Residues 173-192 (DRYLALVHPLRARALRGRRL) lie on the Cytoplasmic side of the membrane. The helical transmembrane segment at 193 to 213 (ALGLCMAAWLMAAALALPLTL) threads the bilayer. Over 214 to 247 (QRQTFRLARSDRVLCHDALPLDAQASHWQPAFTC) the chain is Extracellular. The helical transmembrane segment at 248-268 (LALLGCFLPLLAMLLCYGATL) threads the bilayer. Over 269 to 283 (HTLAASGRRYGHALR) the chain is Cytoplasmic. Residues 284 to 304 (LTAVVLASAVAFFVPSNLLLL) form a helical membrane-spanning segment. At 305 to 319 (LHYSDPSPSAWGNLY) the chain is on the extracellular side. Residues 320-343 (GAYVPSLALSTLNSCVDPFIYYYV) traverse the membrane as a helical segment. The Cytoplasmic segment spans residues 344–385 (SAEFRDKVRAGLFQRSPGDTVASKASAEGGSRGMGTHSSLLQ). Residues 362-385 (DTVASKASAEGGSRGMGTHSSLLQ) are disordered.

Belongs to the G-protein coupled receptor 1 family. In terms of processing, a proteolytic cleavage generates a new N-terminus that functions as a tethered ligand. Widely expressed, with highest levels in lung, pancreas, thyroid, testis and small intestine. Not expressed in brain, kidney, spinal cord and peripheral blood leukocytes. Also detected in platelets.

The protein resides in the cell membrane. Activated upon interaction by mucunain, a cowhage (Mucuna pruriens) plant cysteine proteinase. In terms of biological role, receptor for activated thrombin or trypsin coupled to G proteins that stimulate phosphoinositide hydrolysis. May play a role in platelets activation. The chain is Proteinase-activated receptor 4 (F2RL3) from Homo sapiens (Human).